A 485-amino-acid polypeptide reads, in one-letter code: N-succinylglutamate 5-semialdehyde dehydrogenase (485 aa).

Position 220–225 (220–225 (GSANTG)) interacts with NAD(+). Residues Glu-243 and Cys-278 contribute to the active site.

Belongs to the aldehyde dehydrogenase family. AstD subfamily.

It carries out the reaction N-succinyl-L-glutamate 5-semialdehyde + NAD(+) + H2O = N-succinyl-L-glutamate + NADH + 2 H(+). Its pathway is amino-acid degradation; L-arginine degradation via AST pathway; L-glutamate and succinate from L-arginine: step 4/5. In terms of biological role, catalyzes the NAD-dependent reduction of succinylglutamate semialdehyde into succinylglutamate. The chain is N-succinylglutamate 5-semialdehyde dehydrogenase from Vibrio cholerae serotype O1 (strain M66-2).